A 428-amino-acid chain; its full sequence is Kynureninase (428 aa).

Residues threonine 104, threonine 105, 132-135, aspartate 213, histidine 216, and tyrosine 238 each bind pyridoxal 5'-phosphate; that span reads FPSD. N6-(pyridoxal phosphate)lysine is present on lysine 239. Residues tryptophan 267 and threonine 295 each coordinate pyridoxal 5'-phosphate.

The protein belongs to the kynureninase family. As to quaternary structure, homodimer. The cofactor is pyridoxal 5'-phosphate.

It carries out the reaction L-kynurenine + H2O = anthranilate + L-alanine + H(+). The catalysed reaction is 3-hydroxy-L-kynurenine + H2O = 3-hydroxyanthranilate + L-alanine + H(+). The protein operates within amino-acid degradation; L-kynurenine degradation; L-alanine and anthranilate from L-kynurenine: step 1/1. It functions in the pathway cofactor biosynthesis; NAD(+) biosynthesis; quinolinate from L-kynurenine: step 2/3. Catalyzes the cleavage of L-kynurenine (L-Kyn) and L-3-hydroxykynurenine (L-3OHKyn) into anthranilic acid (AA) and 3-hydroxyanthranilic acid (3-OHAA), respectively. This Bacillus mycoides (strain KBAB4) (Bacillus weihenstephanensis) protein is Kynureninase.